A 202-amino-acid polypeptide reads, in one-letter code: Na(+)-translocating NADH-quinone reductase subunit E (202 aa).

A run of 6 helical transmembrane segments spans residues 5-25 (VSLF…FLGM), 35-55 (VSTA…TVPL), 81-101 (FLGL…LEMF), 114-134 (GVFL…LFMV), 144-164 (VVYG…LAGI), and 180-200 (LGIT…FGGM).

It belongs to the NqrDE/RnfAE family. As to quaternary structure, composed of six subunits; NqrA, NqrB, NqrC, NqrD, NqrE and NqrF.

It localises to the cell inner membrane. The enzyme catalyses a ubiquinone + n Na(+)(in) + NADH + H(+) = a ubiquinol + n Na(+)(out) + NAD(+). Its function is as follows. NQR complex catalyzes the reduction of ubiquinone-1 to ubiquinol by two successive reactions, coupled with the transport of Na(+) ions from the cytoplasm to the periplasm. NqrA to NqrE are probably involved in the second step, the conversion of ubisemiquinone to ubiquinol. The sequence is that of Na(+)-translocating NADH-quinone reductase subunit E from Psychrobacter arcticus (strain DSM 17307 / VKM B-2377 / 273-4).